The sequence spans 165 residues: Putative pre-16S rRNA nuclease (165 aa).

Belongs to the YqgF nuclease family.

The protein localises to the cytoplasm. Could be a nuclease involved in processing of the 5'-end of pre-16S rRNA. The protein is Putative pre-16S rRNA nuclease of Sinorhizobium medicae (strain WSM419) (Ensifer medicae).